A 350-amino-acid polypeptide reads, in one-letter code: D-alanine--D-alanine ligase (350 aa).

In terms of domain architecture, ATP-grasp spans 143 to 344 (KRILSTFGIS…FKSLINKLIL (202 aa)). An ATP-binding site is contributed by 172 to 227 (INNIKFPCCIKPSNQGSSFGVNVANDFISLKESIDVAFLYSKKILIEPFIQGREIE). Mg(2+)-binding residues include Asp-298, Glu-311, and Asn-313.

Belongs to the D-alanine--D-alanine ligase family. Mg(2+) is required as a cofactor. Requires Mn(2+) as cofactor.

Its subcellular location is the cytoplasm. It catalyses the reaction 2 D-alanine + ATP = D-alanyl-D-alanine + ADP + phosphate + H(+). Its pathway is cell wall biogenesis; peptidoglycan biosynthesis. Its function is as follows. Cell wall formation. This chain is D-alanine--D-alanine ligase, found in Wigglesworthia glossinidia brevipalpis.